The chain runs to 520 residues: Cholesterol side-chain cleavage enzyme, mitochondrial (520 aa).

Residues 1–39 (MLARGLPLRSALVKACPPLLNTGREGWGHHRVGTGEGAG) constitute a mitochondrion transit peptide. The disordered stretch occupies residues 27–48 (WGHHRVGTGEGAGISTRTPRPY). Cys-461 is a binding site for heme.

It belongs to the cytochrome P450 family. Interacts with FDX1/adrenodoxin. Heme serves as cofactor.

It localises to the mitochondrion inner membrane. The enzyme catalyses 6 reduced [adrenodoxin] + cholesterol + 3 O2 + 6 H(+) = 4-methylpentanal + pregnenolone + 6 oxidized [adrenodoxin] + 4 H2O. The catalysed reaction is 2 reduced [adrenodoxin] + cholesterol + O2 + 2 H(+) = (22R)-hydroxycholesterol + 2 oxidized [adrenodoxin] + H2O. It carries out the reaction (22R)-hydroxycholesterol + 2 reduced [adrenodoxin] + O2 + 2 H(+) = (20R,22R)-20,22-dihydroxycholesterol + 2 oxidized [adrenodoxin] + H2O. It catalyses the reaction (20R,22R)-20,22-dihydroxycholesterol + 2 reduced [adrenodoxin] + O2 + 2 H(+) = 4-methylpentanal + pregnenolone + 2 oxidized [adrenodoxin] + 2 H2O. It participates in lipid metabolism; C21-steroid hormone metabolism. Its pathway is steroid metabolism; cholesterol metabolism. Functionally, a cytochrome P450 monooxygenase that catalyzes the side-chain hydroxylation and cleavage of cholesterol to pregnenolone, the precursor of most steroid hormones. Catalyzes three sequential oxidation reactions of cholesterol, namely the hydroxylation at C22 followed with the hydroxylation at C20 to yield 20R,22R-hydroxycholesterol that is further cleaved between C20 and C22 to yield the C21-steroid pregnenolone and 4-methylpentanal. Mechanistically, uses molecular oxygen inserting one oxygen atom into a substrate and reducing the second into a water molecule. Two electrons are provided by NADPH via a two-protein mitochondrial transfer system comprising flavoprotein FDXR (adrenodoxin/ferredoxin reductase) and nonheme iron-sulfur protein FDX1 or FDX2 (adrenodoxin/ferredoxin). The sequence is that of Cholesterol side-chain cleavage enzyme, mitochondrial from Capra hircus (Goat).